The primary structure comprises 353 residues: Phospho-N-acetylmuramoyl-pentapeptide-transferase (353 aa).

The next 10 membrane-spanning stretches (helical) occupy residues 24–44, 66–86, 88–108, 129–149, 160–180, 192–212, 229–249, 256–276, 281–301, and 330–350; these read LGFFIAFFLTLFLMPKFILWA, TPTMGGIVFVFATIIASLLCA, LGNPYVLLGIIVLVGFSFVGF, FGMLFVLSLVVSVLLSVKGLD, PLFEMPTALAVGFWVLVFLSA, GLASVPSIFTLLSLSIFVYVA, VGELFVISLALIGSLFGFLWY, VFMGDSGSLALGGFIAYNAIV, ILLVLMGSIFVIETLSVILQV, and KVIVRFWIISMLSNLVALLSL.

This sequence belongs to the glycosyltransferase 4 family. MraY subfamily. Mg(2+) serves as cofactor.

The protein localises to the cell inner membrane. It carries out the reaction UDP-N-acetyl-alpha-D-muramoyl-L-alanyl-gamma-D-glutamyl-meso-2,6-diaminopimeloyl-D-alanyl-D-alanine + di-trans,octa-cis-undecaprenyl phosphate = di-trans,octa-cis-undecaprenyl diphospho-N-acetyl-alpha-D-muramoyl-L-alanyl-D-glutamyl-meso-2,6-diaminopimeloyl-D-alanyl-D-alanine + UMP. The protein operates within cell wall biogenesis; peptidoglycan biosynthesis. In terms of biological role, catalyzes the initial step of the lipid cycle reactions in the biosynthesis of the cell wall peptidoglycan: transfers peptidoglycan precursor phospho-MurNAc-pentapeptide from UDP-MurNAc-pentapeptide onto the lipid carrier undecaprenyl phosphate, yielding undecaprenyl-pyrophosphoryl-MurNAc-pentapeptide, known as lipid I. In Helicobacter acinonychis (strain Sheeba), this protein is Phospho-N-acetylmuramoyl-pentapeptide-transferase.